A 209-amino-acid polypeptide reads, in one-letter code: Large ribosomal subunit protein uL3 (209 aa).

Residues 127–147 (YSRGPMGHGSKSHRVAGARSA) are disordered.

It belongs to the universal ribosomal protein uL3 family. As to quaternary structure, part of the 50S ribosomal subunit. Forms a cluster with proteins L14 and L19.

In terms of biological role, one of the primary rRNA binding proteins, it binds directly near the 3'-end of the 23S rRNA, where it nucleates assembly of the 50S subunit. This Finegoldia magna (strain ATCC 29328 / DSM 20472 / WAL 2508) (Peptostreptococcus magnus) protein is Large ribosomal subunit protein uL3.